The following is a 121-amino-acid chain: Mu-hexatoxin-Mg1a (121 aa).

The signal sequence occupies residues 1 to 20 (MMTLSPFLLLLIAAVVIGNA). A propeptide spanning residues 21 to 80 (SEGEVKNEFEERLKDEFKDPSRSEVAEVILLRELEVLEETLFGKEMTSDTEENRNSREKR) is cleaved from the precursor. 3 disulfide bridges follow: C81–C95, C88–C102, and C94–C116. The residue at position 120 (K120) is a Lysine amide.

Belongs to the neurotoxin 14 (magi-1) family. 09 (magi-1) subfamily. As to expression, expressed by the venom gland.

The protein resides in the secreted. Its function is as follows. Insecticidal neurotoxin. Shows competition for site 3 of insect voltage-gated sodium channels (Nav). Induces flaccid paralysis when injected into lepidopteran larvae. Is not toxic to mice when injected intracranially at 20 pmol/g. The sequence is that of Mu-hexatoxin-Mg1a from Macrothele gigas (Japanese funnel web spider).